Consider the following 163-residue polypeptide: Probable chemoreceptor glutamine deamidase CheD (163 aa).

The protein belongs to the CheD family.

The enzyme catalyses L-glutaminyl-[protein] + H2O = L-glutamyl-[protein] + NH4(+). In terms of biological role, probably deamidates glutamine residues to glutamate on methyl-accepting chemotaxis receptors (MCPs), playing an important role in chemotaxis. The chain is Probable chemoreceptor glutamine deamidase CheD from Borreliella burgdorferi (strain ATCC 35210 / DSM 4680 / CIP 102532 / B31) (Borrelia burgdorferi).